The following is a 385-amino-acid chain: MWGFRLLRSPPLLLLLPQLGIGNASSCSQARTMNPGGSGGARCSLSAEVRRRQCLQLSTVPGADPQRSNELLLLAAAGEGLERQDLPGDPAKEEPQPPPQHHVLYFPGDVQNYHEIMTRHPENYQWENWSLENVATILAHRFPNSYIWVIKCSRMHLHKFSCYDNFVKSNMFGAPEHNTDFGAFKHLYMLLVNAFNLSQNSLSKKSLNVWNKDSIASNCRSSPSHTTNGCQGEKVRTCEKSDESAMSFYPPSLNDASFTLIGFSKGCVVLNQLLFELKEAKKDKNIDAFIKSIRTMYWLDGGHSGGSNTWVTYPEVLKEFAQTGIIVHTHVTPYQVRDPMRSWIGKEHKKFVQILGDLGMQVTSQIHFTKEAPSIENHFRVHEVF.

A mitochondrion-targeting transit peptide spans 1–24; the sequence is MWGFRLLRSPPLLLLLPQLGIGNA.

This sequence belongs to the C2orf69 family.

The protein localises to the mitochondrion matrix. In terms of biological role, may play a role in the respiratory chain. This Homo sapiens (Human) protein is Mitochondrial protein C2orf69 (C2orf69).